A 115-amino-acid polypeptide reads, in one-letter code: Superoxide reductase (115 aa).

The Fe cation site is built by E14, H16, H41, H47, C102, and H105.

Belongs to the desulfoferrodoxin family. Homotetramer. Fe cation serves as cofactor.

It catalyses the reaction reduced [rubredoxin] + superoxide + 2 H(+) = oxidized [rubredoxin] + H2O2. Uses electrons from reduced NADP, by way of rubredoxin and an oxidoreductase, to catalyze the reduction of superoxide to hydrogen peroxide. The polypeptide is Superoxide reductase (sorA) (Pyrococcus horikoshii (strain ATCC 700860 / DSM 12428 / JCM 9974 / NBRC 100139 / OT-3)).